The chain runs to 227 residues: Small ribosomal subunit protein uS3 (227 aa).

The KH type-2 domain occupies 38–106; sequence LRKFIKDRFY…NVNINIQEIR (69 aa).

Belongs to the universal ribosomal protein uS3 family. In terms of assembly, part of the 30S ribosomal subunit. Forms a tight complex with proteins S10 and S14.

Functionally, binds the lower part of the 30S subunit head. Binds mRNA in the 70S ribosome, positioning it for translation. This Syntrophomonas wolfei subsp. wolfei (strain DSM 2245B / Goettingen) protein is Small ribosomal subunit protein uS3.